Here is a 414-residue protein sequence, read N- to C-terminus: Serine hydroxymethyltransferase (414 aa).

(6S)-5,6,7,8-tetrahydrofolate is bound by residues leucine 121 and 125–127 (GHL). An N6-(pyridoxal phosphate)lysine modification is found at lysine 229.

The protein belongs to the SHMT family. In terms of assembly, homodimer. Pyridoxal 5'-phosphate serves as cofactor.

Its subcellular location is the cytoplasm. It carries out the reaction (6R)-5,10-methylene-5,6,7,8-tetrahydrofolate + glycine + H2O = (6S)-5,6,7,8-tetrahydrofolate + L-serine. The protein operates within one-carbon metabolism; tetrahydrofolate interconversion. It participates in amino-acid biosynthesis; glycine biosynthesis; glycine from L-serine: step 1/1. Its function is as follows. Catalyzes the reversible interconversion of serine and glycine with tetrahydrofolate (THF) serving as the one-carbon carrier. This reaction serves as the major source of one-carbon groups required for the biosynthesis of purines, thymidylate, methionine, and other important biomolecules. Also exhibits THF-independent aldolase activity toward beta-hydroxyamino acids, producing glycine and aldehydes, via a retro-aldol mechanism. This Acidovorax ebreus (strain TPSY) (Diaphorobacter sp. (strain TPSY)) protein is Serine hydroxymethyltransferase.